The primary structure comprises 321 residues: D-alanine--D-alanine ligase (321 aa).

The ATP-grasp domain occupies 121–315 (RIWFLTNNIN…FTNLIEEIIK (195 aa)). An ATP-binding site is contributed by 147 to 199 (PMKRPYVIKPLTQGSSIGVEVIFAEDDFNFADYDFPYGDQVIIEQYIKGRELQ). Mg(2+)-binding residues include glutamate 268, glutamate 282, and asparagine 284.

It belongs to the D-alanine--D-alanine ligase family. Mg(2+) serves as cofactor. It depends on Mn(2+) as a cofactor.

The protein resides in the cytoplasm. It carries out the reaction 2 D-alanine + ATP = D-alanyl-D-alanine + ADP + phosphate + H(+). It participates in cell wall biogenesis; peptidoglycan biosynthesis. Functionally, cell wall formation. This is D-alanine--D-alanine ligase from Rickettsia rickettsii (strain Iowa).